Here is a 506-residue protein sequence, read N- to C-terminus: Arylsulfatase A (506 aa).

The signal sequence occupies residues 1 to 17; it reads MALGTLFLALAAGLSTA. Aspartate 28, aspartate 29, and cysteine 68 together coordinate Ca(2+). Residue cysteine 68 is the Nucleophile of the active site. The residue at position 68 (cysteine 68) is a 3-oxoalanine (Cys). Residue lysine 122 participates in substrate binding. Histidine 124 is a catalytic residue. A substrate-binding site is contributed by serine 149. Disulfide bonds link cysteine 155-cysteine 171 and cysteine 160-cysteine 167. An N-linked (GlcNAc...) asparagine glycan is attached at asparagine 157. N-linked (GlcNAc...) asparagine glycosylation occurs at asparagine 183. Residue histidine 228 coordinates substrate. Aspartate 280 and asparagine 281 together coordinate Ca(2+). 4 cysteine pairs are disulfide-bonded: cysteine 299-cysteine 413, cysteine 487-cysteine 499, cysteine 488-cysteine 501, and cysteine 492-cysteine 498. Lysine 301 contributes to the substrate binding site. N-linked (GlcNAc...) asparagine glycosylation is present at asparagine 349.

It belongs to the sulfatase family. Homodimer at neutral pH and homooctamer at acidic pH. Exists both as a single chain of 58 kDa (component A) or as a chain of 50 kDa (component B) linked by disulfide bond(s) to a 7 kDa chain (component C). Interacts with SUMF1. Requires Ca(2+) as cofactor. The conversion to 3-oxoalanine (also known as C-formylglycine, FGly), of a serine or cysteine residue in prokaryotes and of a cysteine residue in eukaryotes, is critical for catalytic activity. This post-translational modification is severely defective in multiple sulfatase deficiency (MSD).

Its subcellular location is the endoplasmic reticulum. It is found in the lysosome. The enzyme catalyses an N-acyl-1-beta-D-(3-O-sulfo)-galactosyl-sphing-4-enine + H2O = a beta-D-galactosyl-(1&lt;-&gt;1')-N-acylsphing-4-enine + sulfate + H(+). Hydrolyzes cerebroside sulfate. This is Arylsulfatase A (Arsa) from Mus musculus (Mouse).